Consider the following 249-residue polypeptide: MADEAQAPPAEGAPPAEGEAPPPAEGAEGAVEGGEAAPPAEPAEPIKHSYTLFYFNVKALAEPLRYLFAYGNQEYEDVRVTRDEWPALKPTMPMGQMPVLEVDGKRVHQSISMARFLAKTVGLCGATPWEDLQIDIVVDTINDFRLKIAVVSYEPEDEIKEKKLVTLNAEVIPFYLEKLEQTVKDNDGHLALGKLTWADVYFAGITDYMNYMVKRDLLEPYPALRGVVDAVNALEPIKAWIEKRPVTEV.

The span at 1–38 shows a compositional bias: low complexity; the sequence is MADEAQAPPAEGAPPAEGEAPPPAEGAEGAVEGGEAAP. Residues 1-42 are disordered; that stretch reads MADEAQAPPAEGAPPAEGEAPPPAEGAEGAVEGGEAAPPAEP. Residues 48 to 125 form the GST N-terminal domain; the sequence is HSYTLFYFNV…FLAKTVGLCG (78 aa). Residues Y54, W85, K89, 96–97, and 109–110 contribute to the glutathione site; these read QM and QS. The GST C-terminal domain occupies 127–249; that stretch reads TPWEDLQIDI…WIEKRPVTEV (123 aa).

It belongs to the GST superfamily. Sigma family. In terms of assembly, homodimer.

The catalysed reaction is RX + glutathione = an S-substituted glutathione + a halide anion + H(+). Conjugation of reduced glutathione to a wide number of exogenous and endogenous hydrophobic electrophiles. May be involved in the detoxification of metabolites produced during cellular division and morphogenesis. This Drosophila melanogaster (Fruit fly) protein is Glutathione S-transferase S1.